The sequence spans 833 residues: Glycerol-3-phosphate acyltransferase (833 aa).

The HXXXXD motif signature appears at 309 to 314 (CHRSHI).

The protein belongs to the GPAT/DAPAT family.

It localises to the cell inner membrane. The enzyme catalyses sn-glycerol 3-phosphate + an acyl-CoA = a 1-acyl-sn-glycero-3-phosphate + CoA. It participates in phospholipid metabolism; CDP-diacylglycerol biosynthesis; CDP-diacylglycerol from sn-glycerol 3-phosphate: step 1/3. The chain is Glycerol-3-phosphate acyltransferase from Pseudomonas savastanoi pv. phaseolicola (strain 1448A / Race 6) (Pseudomonas syringae pv. phaseolicola (strain 1448A / Race 6)).